Reading from the N-terminus, the 250-residue chain is MANGPTHQFLIFKIIPIDIGGIDFSFTNASLFMVASAVLSAGFLYFATSARSVIPGRSQSVAEMAYEFIASMLKEGAGTKGMKFFPLVFSLFMFVLTANLLGMVPYFYTVTSQIIVTFALALLVILTVILYGFIKHGFGFLKLFVPQGVPGILLPLVVIIEIISFLSRPISLSVRLFANMLAGHITLKVFAGFVASLGTLGALGIGGAILPLIMTVALTGLEFLVAFLQAYVFAVLTCMYLNDAVHPGGH.

A run of 6 helical transmembrane segments spans residues 29–49 (ASLFMVASAVLSAGFLYFATS), 84–104 (FFPLVFSLFMFVLTANLLGMV), 114–134 (IIVTFALALLVILTVILYGFI), 143–163 (LFVPQGVPGILLPLVVIIEII), 185–205 (ITLKVFAGFVASLGTLGALGI), and 208–228 (AILPLIMTVALTGLEFLVAFL).

This sequence belongs to the ATPase A chain family. F-type ATPases have 2 components, CF(1) - the catalytic core - and CF(0) - the membrane proton channel. CF(1) has five subunits: alpha(3), beta(3), gamma(1), delta(1), epsilon(1). CF(0) has three main subunits: a(1), b(2) and c(9-12). The alpha and beta chains form an alternating ring which encloses part of the gamma chain. CF(1) is attached to CF(0) by a central stalk formed by the gamma and epsilon chains, while a peripheral stalk is formed by the delta and b chains.

The protein resides in the cell inner membrane. Key component of the proton channel; it plays a direct role in the translocation of protons across the membrane. The chain is ATP synthase subunit a from Rhizobium rhizogenes (strain K84 / ATCC BAA-868) (Agrobacterium radiobacter).